The sequence spans 625 residues: Voltage-gated potassium channel KCNC4 (625 aa).

Disordered stretches follow at residues 1–24 (MISS…SKTC) and 65–86 (LADP…SSGS). The segment at 1-28 (MISSVCVSSYRGRKSGNKPPSKTCLKEE) is inactivation gate. Residues 1–227 (MISSVCVSSY…EDPYSSRAAR (227 aa)) are Cytoplasmic-facing. 4 positions are modified to phosphoserine: S8, S9, S15, and S21. Positions 77–86 (DGGGAGSSGS) are enriched in gly residues. 4 residues coordinate Zn(2+): H117, C123, C144, and C145. A helical membrane pass occupies residues 228–248 (VVAFASLFFILVSITTFCLET). N-linked (GlcNAc...) asparagine glycans are attached at residues N257 and N266. The helical transmembrane segment at 279–299 (EPILTYIEGVCVMWFTLEFLV) threads the bilayer. The Cytoplasmic segment spans residues 300–313 (RIVCCPDTLDFVKN). The helical transmembrane segment at 314 to 334 (LLNIIDFVAILPFYLEVGLSG) threads the bilayer. A helical; Voltage-sensor membrane pass occupies residues 346–365 (FLRVVRFVRILRIFKLTRHF). At 366–381 (VGLRVLGHTLRASTNE) the chain is on the cytoplasmic side. The chain crosses the membrane as a helical span at residues 382–402 (FLLLIIFLALGVLIFATMIYY). 4 residues coordinate K(+): T437, L438, G439, and Y440. Positions 437–442 (TLGYGD) match the Selectivity filter motif. Residues 453–473 (VGALCALAGVLTIAMPVPVIV) traverse the membrane as a helical segment. Residues 474–625 (NNFGMYYSLA…CVPVSHTCAL (152 aa)) are Cytoplasmic-facing. Residues 490–581 (PKKRKKHVPR…RRALRRSGTR (92 aa)) form a disordered region. Residues 528-543 (AREEGMVERKRADSKQ) are compositionally biased toward basic and acidic residues.

The protein belongs to the potassium channel family. C (Shaw) (TC 1.A.1.2) subfamily. Kv3.4/KCNC4 sub-subfamily. As to quaternary structure, homotetramer. Heterotetramer of potassium channel proteins. Post-translationally, phosphorylation of serine residues in the inactivation gate inhibits rapid channel closure.

It is found in the membrane. The catalysed reaction is K(+)(in) = K(+)(out). Voltage-gated potassium channel that opens in response to the voltage difference across the membrane, forming a potassium-selective channel through which potassium ions pass in accordance with their electrochemical gradient. The channel displays rapid activation and inactivation kinetics. This Rattus norvegicus (Rat) protein is Voltage-gated potassium channel KCNC4.